We begin with the raw amino-acid sequence, 689 residues long: Glycine--tRNA ligase beta subunit (689 aa).

It belongs to the class-II aminoacyl-tRNA synthetase family. As to quaternary structure, tetramer of two alpha and two beta subunits.

The protein resides in the cytoplasm. It catalyses the reaction tRNA(Gly) + glycine + ATP = glycyl-tRNA(Gly) + AMP + diphosphate. In Shewanella amazonensis (strain ATCC BAA-1098 / SB2B), this protein is Glycine--tRNA ligase beta subunit.